The following is a 108-amino-acid chain: Somatoliberin (108 aa).

The N-terminal stretch at 1-20 is a signal peptide; it reads MPLWVFFFVILTLSNSSHCS. A propeptide spanning residues 21–31 is cleaved from the precursor; that stretch reads PPPPLTLRMRR. A Leucine amide modification is found at L75. A propeptide spanning residues 78–108 is cleaved from the precursor; it reads QVDSMWAEQKQMELESILVALLQKHSRNSQG.

It belongs to the glucagon family.

The protein localises to the secreted. In terms of biological role, GRF is released by the hypothalamus and acts on the adenohypophyse to stimulate the secretion of growth hormone. The polypeptide is Somatoliberin (GHRH) (Homo sapiens (Human)).